The sequence spans 419 residues: Enolase (419 aa).

Gln161 contacts (2R)-2-phosphoglycerate. The Proton donor role is filled by Glu205. Mg(2+) contacts are provided by Asp240, Glu283, and Asp309. The (2R)-2-phosphoglycerate site is built by Lys334, Arg363, Ser364, and Lys385. Residue Lys334 is the Proton acceptor of the active site.

Belongs to the enolase family. Mg(2+) is required as a cofactor.

The protein localises to the cytoplasm. Its subcellular location is the secreted. It localises to the cell surface. It carries out the reaction (2R)-2-phosphoglycerate = phosphoenolpyruvate + H2O. Its pathway is carbohydrate degradation; glycolysis; pyruvate from D-glyceraldehyde 3-phosphate: step 4/5. Catalyzes the reversible conversion of 2-phosphoglycerate (2-PG) into phosphoenolpyruvate (PEP). It is essential for the degradation of carbohydrates via glycolysis. The sequence is that of Enolase from Saccharolobus islandicus (strain L.S.2.15 / Lassen #1) (Sulfolobus islandicus).